The following is a 184-amino-acid chain: Photosystem I assembly protein Ycf4 (184 aa).

Transmembrane regions (helical) follow at residues F22–S42 and I57–S77.

It belongs to the Ycf4 family.

It is found in the plastid. It localises to the chloroplast thylakoid membrane. In terms of biological role, seems to be required for the assembly of the photosystem I complex. In Coffea arabica (Arabian coffee), this protein is Photosystem I assembly protein Ycf4.